We begin with the raw amino-acid sequence, 131 residues long: D-ribose pyranase (131 aa).

His-20 (proton donor) is an active-site residue. Substrate-binding positions include Asp-28, His-98, and 120–122; that span reads FSN.

It belongs to the RbsD / FucU family. RbsD subfamily. As to quaternary structure, homodecamer.

The protein localises to the cytoplasm. The enzyme catalyses beta-D-ribopyranose = beta-D-ribofuranose. The protein operates within carbohydrate metabolism; D-ribose degradation; D-ribose 5-phosphate from beta-D-ribopyranose: step 1/2. In terms of biological role, catalyzes the interconversion of beta-pyran and beta-furan forms of D-ribose. The protein is D-ribose pyranase of Oenococcus oeni (strain ATCC BAA-331 / PSU-1).